Reading from the N-terminus, the 666-residue chain is Long chain acyl-CoA synthetase 5 (666 aa).

228 to 239 (IMYTSGTTGDPK) contributes to the ATP binding site. The fatty acid-binding stretch occupies residues 495–519 (DGWLHTGDVGEWQPNGSMKIIDRKK).

Belongs to the ATP-dependent AMP-binding enzyme family. Mg(2+) is required as a cofactor.

It catalyses the reaction a long-chain fatty acid + ATP + CoA = a long-chain fatty acyl-CoA + AMP + diphosphate. The protein operates within lipid metabolism; fatty acid metabolism. Its function is as follows. Activation of long-chain fatty acids for both synthesis of cellular lipids, and degradation via beta-oxidation. Preferentially uses palmitate, palmitoleate, oleate and linoleate. The polypeptide is Long chain acyl-CoA synthetase 5 (LACS5) (Arabidopsis thaliana (Mouse-ear cress)).